We begin with the raw amino-acid sequence, 184 residues long: Homeobox protein LOX10 (184 aa).

Disordered regions lie at residues 1–29 (KIVS…PLQH) and 129–184 (YKTK…NKPG). Residues 76–135 (RRKRRILFSQAQIYELERRFRQQKYLSAPEREHLATFIGLTPTQVKIWFQNHRYKTKKSK) constitute a DNA-binding region (homeobox). Composition is skewed to low complexity over residues 140-161 (NSPS…ASTT) and 174-184 (SNTTNNNNKPG).

The protein belongs to the NK-2 homeobox family. As to expression, expressed in a segmental pattern in the endoderm and in the cephalic nervous system.

Its subcellular location is the nucleus. In terms of biological role, may play a role in patterning the gut. The sequence is that of Homeobox protein LOX10 (LOX10) from Helobdella triserialis (Leech).